The primary structure comprises 466 residues: Putative chitinase 2 (466 aa).

Residues 1–17 (MYLTIWLVPLLAVGTWG) form the signal peptide. In terms of domain architecture, GH18 spans 20–380 (FNRFCHYNSW…MAVIHGLNAY (361 aa)). C24 and C49 are joined by a disulfide. E141 serves as the catalytic Proton donor. Residues 395–447 (YNKKILRARVSLRNYRRRNQQGKVAEMEQRIRNLEQELQQSMGNMAYERQQAQ) adopt a coiled-coil conformation.

Belongs to the glycosyl hydrolase 18 family. Prismatic layer of shell (at protein level). Expressed primarily in the mantle with highest level in the mantle edge and lower level in the mantle pallium.

The protein resides in the secreted. The enzyme catalyses Random endo-hydrolysis of N-acetyl-beta-D-glucosaminide (1-&gt;4)-beta-linkages in chitin and chitodextrins.. This is Putative chitinase 2 from Margaritifera margaritifera (Freshwater pearl mussel).